The primary structure comprises 508 residues: BICD family-like cargo adapter 2 (508 aa).

The span at Met1–Gly22 shows a compositional bias: low complexity. 3 disordered regions span residues Met1–Phe27, Leu132–Glu152, and Ala300–Ser351. 2 coiled-coil regions span residues Ala64–Ala300 and Ala353–Val458. A compositionally biased stretch (basic and acidic residues) spans Gln135–Ala149. The interval Lys470–Arg491 is disordered. The span at Ser473–Ser489 shows a compositional bias: low complexity.

It belongs to the BICDR family. As to quaternary structure, interacts with RAB13.

This is BICD family-like cargo adapter 2 (BICDL2) from Homo sapiens (Human).